The following is a 210-amino-acid chain: Na(+)-translocating NADH-quinone reductase subunit D (210 aa).

The next 6 membrane-spanning stretches (helical) occupy residues 14 to 34 (PIINNNPIALQILGVCSALAV), 42 to 62 (LVMTIALTAVTAFSNLFISLI), 72 to 92 (IIVQMTIIASLVIVVDQVLQA), 96 to 116 (AISKQLSVFVGLIITNCIVMG), 131 to 151 (FMDGIGNGLGYGAILLSVGVV), and 178 to 198 (NGLLLLPPSAFFLIGGLIWLI).

It belongs to the NqrDE/RnfAE family. As to quaternary structure, composed of six subunits; NqrA, NqrB, NqrC, NqrD, NqrE and NqrF.

It localises to the cell inner membrane. It carries out the reaction a ubiquinone + n Na(+)(in) + NADH + H(+) = a ubiquinol + n Na(+)(out) + NAD(+). In terms of biological role, NQR complex catalyzes the reduction of ubiquinone-1 to ubiquinol by two successive reactions, coupled with the transport of Na(+) ions from the cytoplasm to the periplasm. NqrA to NqrE are probably involved in the second step, the conversion of ubisemiquinone to ubiquinol. This is Na(+)-translocating NADH-quinone reductase subunit D from Shewanella frigidimarina (strain NCIMB 400).